The sequence spans 217 residues: Ribosomal RNA small subunit methyltransferase G (217 aa).

Residues Gly-85, Leu-90, 135-136 (IE), and Arg-149 each bind S-adenosyl-L-methionine.

This sequence belongs to the methyltransferase superfamily. RNA methyltransferase RsmG family.

Its subcellular location is the cytoplasm. The catalysed reaction is guanosine(527) in 16S rRNA + S-adenosyl-L-methionine = N(7)-methylguanosine(527) in 16S rRNA + S-adenosyl-L-homocysteine. Its function is as follows. Specifically methylates the N7 position of guanine in position 527 of 16S rRNA. The chain is Ribosomal RNA small subunit methyltransferase G from Acidiphilium cryptum (strain JF-5).